Consider the following 833-residue polypeptide: Patatin-like phospholipase domain-containing protein SNOG_00918 (833 aa).

2 disordered regions span residues 1–20 and 49–71; these read MTDVKKESDGPEPYSSSAFD and HLSPSTEDLTAPQPETGKFSANN. The chain crosses the membrane as a helical span at residues 108–128; that stretch reads WPLLVVVLGWLLFLSIAYVFT. One can recognise a PNPLA domain in the interval 301–457; the sequence is LCLSGGATFA…RTDIPLKALN (157 aa). Residues 332-336 carry the GXSXG motif; the sequence is GTSGG. S334 serves as the catalytic Nucleophile. D444 acts as the Proton acceptor in catalysis. 2 disordered regions span residues 630–657 and 680–833; these read TKSKSPSEEAIYPLSGSESSSSADFSRP and LRTD…GKGL. Residues 644–655 show a composition bias toward low complexity; the sequence is SGSESSSSADFS. Polar residues predominate over residues 689 to 707; that stretch reads DTPNSPSLSARLTGWWNTK. Basic and acidic residues-rich tracts occupy residues 740–750, 759–769, and 782–794; these read RPPKEVRDLQA, RNSDFLEEIRR, and DEGRAGRYRRGDV. The segment covering 809–819 has biased composition (acidic residues); the sequence is EFGDNEGDGEE.

The protein belongs to the PLPL family.

The protein localises to the membrane. Its function is as follows. Probable lipid hydrolase. This Phaeosphaeria nodorum (strain SN15 / ATCC MYA-4574 / FGSC 10173) (Glume blotch fungus) protein is Patatin-like phospholipase domain-containing protein SNOG_00918.